Here is a 270-residue protein sequence, read N- to C-terminus: Elongation factor Ts (270 aa).

Residues 77–80 are involved in Mg(2+) ion dislocation from EF-Tu; the sequence is TDFV.

It belongs to the EF-Ts family.

It is found in the cytoplasm. Associates with the EF-Tu.GDP complex and induces the exchange of GDP to GTP. It remains bound to the aminoacyl-tRNA.EF-Tu.GTP complex up to the GTP hydrolysis stage on the ribosome. In Nocardioides sp. (strain ATCC BAA-499 / JS614), this protein is Elongation factor Ts.